Here is a 255-residue protein sequence, read N- to C-terminus: H-2 class II histocompatibility antigen, E-U alpha chain (255 aa).

The signal sequence occupies residues 1–25 (MATIGALLLRFFFIAVLMSSQKSWA). The interval 26–109 (IKEEHTIIQA…KRSNNTPDAN (84 aa)) is alpha-1. Topologically, residues 26 to 217 (IKEEHTIIQA…KTLLPETKEN (192 aa)) are extracellular. The tract at residues 110-203 (VAPEVTVLSR…GLEEPLRKHW (94 aa)) is alpha-2. Residues 112-204 (PEVTVLSRSP…LEEPLRKHWE (93 aa)) enclose the Ig-like C1-type domain. Cys132 and Cys188 form a disulfide bridge. N-linked (GlcNAc...) asparagine glycosylation occurs at Asn143. Positions 204–216 (EFEEKTLLPETKE) are connecting peptide. The chain crosses the membrane as a helical span at residues 218–238 (VVCALGLFVGLVGIVVGIILI). Residues 239 to 255 (MKGIKKRNVVERRQGAL) are Cytoplasmic-facing.

It belongs to the MHC class II family.

Its subcellular location is the membrane. The polypeptide is H-2 class II histocompatibility antigen, E-U alpha chain (H2-Ea) (Mus musculus (Mouse)).